We begin with the raw amino-acid sequence, 433 residues long: Ascus wall endo-1,3-alpha-glucanase (433 aa).

Belongs to the glycosyl hydrolase 71 family.

Its subcellular location is the ascus epiplasm. The catalysed reaction is Endohydrolysis of (1-&gt;3)-alpha-D-glucosidic linkages in isolichenin, pseudonigeran and nigeran.. Promotes the release of ascospores from asci by hydrolyzing 1,3-alpha-glucan in the ascus wall. This is Ascus wall endo-1,3-alpha-glucanase from Schizosaccharomyces pombe (strain 972 / ATCC 24843) (Fission yeast).